The primary structure comprises 220 residues: MEFLFGRRKTPEEMLRQNQRALNKAMREMDRERQKLEQQEKKIIADIKKMAKQGQMDAVKIMAKDLVRTRRYVKKFIMMRANIQAVSLKIQTLKSNNSMAQAMKGVTKAMATMNRQLKLPQIQKIMMEFEKQSEIMDMKEEMMNDAIDDAMGDEDDEEESDAVVSQVLDELGLTLTDELSNLPSTGGSLSVAGAKKGEPSAALADADADLEERLNNLRRD.

2 coiled-coil regions span residues 12–53 (EEML…MAKQ) and 199–220 (PSAA…LRRD). The interval 179-208 (LSNLPSTGGSLSVAGAKKGEPSAALADADA) is disordered. Residues 208-218 (ADLEERLNNLR) carry the MIT-interacting motif motif.

It belongs to the SNF7 family. Probable core component of the endosomal sorting required for transport complex III (ESCRT-III). ESCRT-III components are thought to multimerize to form a flat lattice on the perimeter membrane of the endosome.

It is found in the late endosome membrane. It localises to the cytoplasm. Probable core component of the endosomal sorting required for transport complex III (ESCRT-III) which is involved in multivesicular bodies (MVBs) formation and sorting of endosomal cargo proteins into MVBs. MVBs contain intraluminal vesicles (ILVs) that are generated by invagination and scission from the limiting membrane of the endosome and mostly are delivered to lysosomes enabling degradation of membrane proteins, such as stimulated growth factor receptors, lysosomal enzymes and lipids. The protein is Charged multivesicular body protein 2a (chmp2a) of Xenopus tropicalis (Western clawed frog).